A 296-amino-acid chain; its full sequence is 4-hydroxybenzoate octaprenyltransferase (296 aa).

8 helical membrane passes run 28–48 (IGTLLLLWPTYWALWLASDGI), 51–71 (LAVLAAFTIGTFLMRSAGCVI), 102–122 (LLLTAFLCLLAALCLIPLNHL), 143–163 (FFPIPQLYLGLAFSFGIPMAF), 174–194 (AWILFAANVLWTLAYDTVYAM), 212–232 (FGRYDIAAVMLCHGGFTLLMA), 233–253 (VLGAVIGAAWAYWTAIPIVLL), and 274–294 (FLANNRIGWVWFTAIFAHTFF).

This sequence belongs to the UbiA prenyltransferase family. Requires Mg(2+) as cofactor.

Its subcellular location is the cell inner membrane. The enzyme catalyses all-trans-octaprenyl diphosphate + 4-hydroxybenzoate = 4-hydroxy-3-(all-trans-octaprenyl)benzoate + diphosphate. It functions in the pathway cofactor biosynthesis; ubiquinone biosynthesis. Functionally, catalyzes the prenylation of para-hydroxybenzoate (PHB) with an all-trans polyprenyl group. Mediates the second step in the final reaction sequence of ubiquinone-8 (UQ-8) biosynthesis, which is the condensation of the polyisoprenoid side chain with PHB, generating the first membrane-bound Q intermediate 3-octaprenyl-4-hydroxybenzoate. The protein is 4-hydroxybenzoate octaprenyltransferase of Neisseria meningitidis serogroup B (strain ATCC BAA-335 / MC58).